The primary structure comprises 65 residues: UPF0434 protein CC_0108 (65 aa).

Belongs to the UPF0434 family.

This Caulobacter vibrioides (strain ATCC 19089 / CIP 103742 / CB 15) (Caulobacter crescentus) protein is UPF0434 protein CC_0108.